We begin with the raw amino-acid sequence, 469 residues long: Argininosuccinate lyase (469 aa).

The protein belongs to the lyase 1 family. Argininosuccinate lyase subfamily.

It localises to the cytoplasm. It catalyses the reaction 2-(N(omega)-L-arginino)succinate = fumarate + L-arginine. It participates in amino-acid biosynthesis; L-arginine biosynthesis; L-arginine from L-ornithine and carbamoyl phosphate: step 3/3. The protein is Argininosuccinate lyase of Saccharophagus degradans (strain 2-40 / ATCC 43961 / DSM 17024).